A 397-amino-acid polypeptide reads, in one-letter code: Chalcone synthase 2 (397 aa).

The active site involves Cys-168.

Belongs to the thiolase-like superfamily. Chalcone/stilbene synthases family.

The catalysed reaction is (E)-4-coumaroyl-CoA + 3 malonyl-CoA + 3 H(+) = 2',4,4',6'-tetrahydroxychalcone + 3 CO2 + 4 CoA. Its pathway is secondary metabolite biosynthesis; flavonoid biosynthesis. The primary product of this enzyme is 4,2',4',6'-tetrahydroxychalcone (also termed naringenin-chalcone or chalcone) which can under specific conditions spontaneously isomerize into naringenin. This chain is Chalcone synthase 2 (CHS2), found in Daucus carota (Wild carrot).